A 718-amino-acid polypeptide reads, in one-letter code: Catalase-peroxidase 1 (718 aa).

The tryptophyl-tyrosyl-methioninium (Trp-Tyr) (with M-247) cross-link spans 93-221 (WHSAGTYRIA…LAAVMMGLIY (129 aa)). Histidine 94 functions as the Proton acceptor in the catalytic mechanism. The tryptophyl-tyrosyl-methioninium (Tyr-Met) (with W-93) cross-link spans 221-247 (YVNPEGVDGNPDPLKTAQDMRVTFARM). Histidine 262 provides a ligand contact to heme b.

It belongs to the peroxidase family. Peroxidase/catalase subfamily. As to quaternary structure, homodimer or homotetramer. The cofactor is heme b. Formation of the three residue Trp-Tyr-Met cross-link is important for the catalase, but not the peroxidase activity of the enzyme.

The catalysed reaction is H2O2 + AH2 = A + 2 H2O. It carries out the reaction 2 H2O2 = O2 + 2 H2O. Functionally, bifunctional enzyme with both catalase and broad-spectrum peroxidase activity. The polypeptide is Catalase-peroxidase 1 (Shewanella amazonensis (strain ATCC BAA-1098 / SB2B)).